We begin with the raw amino-acid sequence, 49 residues long: Large ribosomal subunit protein bL33B (49 aa).

The protein belongs to the bacterial ribosomal protein bL33 family.

The polypeptide is Large ribosomal subunit protein bL33B (Lactobacillus delbrueckii subsp. bulgaricus (strain ATCC BAA-365 / Lb-18)).